The chain runs to 598 residues: Mitochondrial distribution and morphology protein 30 (598 aa).

In terms of domain architecture, F-box spans 13 to 59 (SFTIDHLPPEIWLCISKLVGTSDLHNLCLINRRLYLTITSDEIWKRR).

Interacts with SKP1. Component of the probable SCF(MDM30) complex containing CDC53, SKP1, RBX1 and MDM30. Interacts with SKP1 and FZO1.

It is found in the cytoplasm. It localises to the mitochondrion. It functions in the pathway protein modification; protein ubiquitination. Its function is as follows. Substrate recognition component of a SCF (SKP1-CUL1-F-box protein) E3 ubiquitin-protein ligase complex which mediates the ubiquitination and subsequent proteasomal degradation of target proteins. Probably recognizes and binds to phosphorylated target proteins. Recognizes FZO1 and regulates the amount of FZO1. Regulatory factor for the mitochondrial fusion machinery. Required for mitochondrial DNA maintenance. In Saccharomyces cerevisiae (strain ATCC 204508 / S288c) (Baker's yeast), this protein is Mitochondrial distribution and morphology protein 30 (MDM30).